Here is a 131-residue protein sequence, read N- to C-terminus: Profilin-2 (131 aa).

Cysteine 13 and cysteine 115 are joined by a disulfide. The Involved in PIP2 interaction signature appears at 81–97 (AVIRGKKGPGGVTVKKT). Threonine 111 carries the post-translational modification Phosphothreonine.

Belongs to the profilin family. Multimer. Occurs in many kinds of cells as a complex with monomeric actin in a 1:1 ratio. Post-translationally, phosphorylated by MAP kinases.

The protein resides in the cytoplasm. It is found in the cytoskeleton. Its function is as follows. Binds to actin and affects the structure of the cytoskeleton. At high concentrations, profilin prevents the polymerization of actin, whereas it enhances it at low concentrations. By binding to PIP2, it inhibits the formation of IP3 and DG. The chain is Profilin-2 from Hevea brasiliensis (Para rubber tree).